The sequence spans 1170 residues: RNA-binding protein 33 (1170 aa).

2 disordered regions span residues 1–152 and 199–221; these read MAAA…EGHE and KDIK…LRFK. Position 2 is an N-acetylalanine (Ala2). Basic and acidic residues predominate over residues 20–36; the sequence is QFDKPGAERSWRRRAAD. Residues 37–49 show a composition bias toward acidic residues; that stretch reads EDWDSELEDDLLG. A Phosphoserine modification is found at Ser41. Residues 82–108 are compositionally biased toward polar residues; sequence FSSQGVTISLNATSGMVTSFELSDNTN. Composition is skewed to acidic residues over residues 112–126 and 203–214; these read GEQE…GEDE and EESDEEEEDDEE. Ser205 and Ser233 each carry phosphoserine. 4 disordered regions span residues 259-708, 721-784, 833-863, and 942-1050; these read FEER…NSNL, MSSS…PDED, QLYA…PFPG, and AVPQ…VPPG. Over residues 267 to 278 the composition is skewed to basic residues; that stretch reads KQGRYSSRRGGR. Over residues 289–306 the composition is skewed to basic and acidic residues; it reads GDQRRESTERGRMKDHRP. Pro residues predominate over residues 311-329; sequence TQPPVVPQAPPPPPPPPQQ. Low complexity-rich tracts occupy residues 335–348, 357–372, and 394–403; these read LFQP…LPVQ, QGMH…RMMM, and TVVTPVQVPL. Residues 419 to 433 are compositionally biased toward pro residues; sequence FPGPPEFPQHTPGPV. Arg470 bears the Asymmetric dimethylarginine mark. Pro residues-rich tracts occupy residues 481 to 490, 554 to 568, and 582 to 630; these read SPPPPPPPPT, FIPP…PGQP, and LHPP…PQHP. Residues 632–642 show a composition bias toward basic residues; the sequence is QHQHHHHHHHL. 2 stretches are compositionally biased toward polar residues: residues 662–708 and 721–732; these read QTAQ…NSNL and MSSSRCSATPSA. Phosphoserine is present on residues Ser741 and Ser765. The stretch at 789–835 forms a coiled coil; sequence LYRLKIEEQKRLREEILKQKELRRQQQAGARKKELLERLAQQQQQLY. Ser951 carries the post-translational modification Phosphoserine. Lys960 participates in a covalent cross-link: Glycyl lysine isopeptide (Lys-Gly) (interchain with G-Cter in SUMO2). Phosphoserine is present on residues Ser973 and Ser991. Arg1028 carries the post-translational modification Asymmetric dimethylarginine; alternate. Residue Arg1028 is modified to Omega-N-methylarginine; alternate. Positions 1098 to 1170 constitute an RRM domain; that stretch reads CVVSVEGLSS…SHINVALIVE (73 aa).

In terms of assembly, associates with the NXF1-NXT1 RNA export complex. Interacts with ALKBH5; facilitating ALKBH5 recruitment to m6A-containing transcripts. Interacts with SENP1; promoting ALKBH5 deSUMOylation and subsequent activation.

The protein resides in the nucleus. It localises to the cytoplasm. Functionally, RNA reader protein, which recognizes and binds specific RNAs, thereby regulating RNA metabolic processes, such as mRNA export, mRNA stability and/or translation. Binds a subset of intronless RNAs containing GC-rich elements, such as NORAD, and promotes their nuclear export by recruiting target RNAs to components of the NXF1-NXT1 RNA export machinery. Specifically recognizes and binds N6-methyladenosine (m6A)-containing mRNAs, promoting their demethylation by ALKBH5. Acts as an molecular adapter, which (1) promotes ALKBH5 recruitment to m6A-containing transcripts and (2) activates ALKBH5 demethylase activity by recruiting SENP1, leading to ALKBH5 deSUMOylation and subsequent activation. The polypeptide is RNA-binding protein 33 (Homo sapiens (Human)).